The sequence spans 53 residues: Small ribosomal subunit protein uS14m (53 aa).

Belongs to the universal ribosomal protein uS14 family.

The protein resides in the mitochondrion. This chain is Small ribosomal subunit protein uS14m (RPS14), found in Bigelowiella natans (Pedinomonas minutissima).